The primary structure comprises 183 residues: Ferritin heavy chain (183 aa).

Methionine 1 carries the N-acetylmethionine modification. Residue threonine 2 is modified to N-acetylthreonine; in Ferritin heavy chain, N-terminally processed. The Ferritin-like diiron domain occupies 11–160; that stretch reads QNYHQDSEAA…DHVTNLRKMG (150 aa). Residues glutamate 28, glutamate 63, histidine 66, glutamate 108, and glutamine 142 each contribute to the Fe cation site. Phosphoserine is present on residues serine 179 and serine 183.

The protein belongs to the ferritin family. As to quaternary structure, oligomer of 24 subunits. There are two types of subunits: L (light) chain and H (heavy) chain. The major chain can be light or heavy, depending on the species and tissue type. The functional molecule forms a roughly spherical shell with a diameter of 12 nm and contains a central cavity into which the insoluble mineral iron core is deposited. Interacts with NCOA4; NCOA4 promotes targeting of the iron-binding ferritin complex to autolysosomes following starvation or iron depletion.

The protein resides in the cytoplasm. It is found in the lysosome. It localises to the cytoplasmic vesicle. The protein localises to the autophagosome. It carries out the reaction 4 Fe(2+) + O2 + 4 H(+) = 4 Fe(3+) + 2 H2O. Functionally, stores iron in a soluble, non-toxic, readily available form. Important for iron homeostasis. Has ferroxidase activity. Iron is taken up in the ferrous form and deposited as ferric hydroxides after oxidation. Also plays a role in delivery of iron to cells. Mediates iron uptake in capsule cells of the developing kidney. Delivery to lysosomes is mediated by the cargo receptor NCOA4 for autophagic degradation and release of iron. The polypeptide is Ferritin heavy chain (FTH1) (Felis catus (Cat)).